Here is a 267-residue protein sequence, read N- to C-terminus: Ras-related protein Rab-36 (267 aa).

GTP contacts are provided by Val-68, Gly-69, Lys-70, Thr-71, Ser-72, Asp-83, Tyr-86, and Thr-89. Thr-71 contributes to the Mg(2+) binding site. A Switch 1 motif is present at residues 76-94 (RFCKNVFDRDYKATIGVDF). Residues Thr-89 and Asp-112 each contribute to the Mg(2+) site. Positions 113-132 (TAGQEKFKCIASAYYRGAQV) match the Switch 2 motif. GTP is bound by residues Gly-115, Lys-172, Asp-174, Ser-203, Ala-204, and Lys-205. Positions 243–267 (GDLIQMEGSPPETQESKRPSSLGCC) are disordered. 2 S-geranylgeranyl cysteine lipidation sites follow: Cys-266 and Cys-267.

This sequence belongs to the small GTPase superfamily. Rab family. It depends on Mg(2+) as a cofactor. As to expression, ubiquitously present in all tissues examined.

It localises to the golgi apparatus membrane. It catalyses the reaction GTP + H2O = GDP + phosphate + H(+). Its activity is regulated as follows. Regulated by guanine nucleotide exchange factors (GEFs) which promote the exchange of bound GDP for free GTP. Regulated by GTPase activating proteins (GAPs) which increase the GTP hydrolysis activity. Inhibited by GDP dissociation inhibitors (GDIs). The small GTPases Rab are key regulators of intracellular membrane trafficking, from the formation of transport vesicles to their fusion with membranes. Rabs cycle between an inactive GDP-bound form and an active GTP-bound form that is able to recruit to membranes different sets of downstream effectors directly responsible for vesicle formation, movement, tethering and fusion. The protein is Ras-related protein Rab-36 of Homo sapiens (Human).